Here is a 280-residue protein sequence, read N- to C-terminus: Virginiamycin B lyase (280 aa).

Position 215 (H215) interacts with substrate. E254 contacts Mg(2+). H256 acts as the Proton acceptor in catalysis. E271 contacts Mg(2+).

This sequence belongs to the Vgb family. As to quaternary structure, monomer. Requires Mg(2+) as cofactor.

Its function is as follows. Inactivates the type B streptogramin antibiotics by linearizing the lactone ring at the ester linkage, generating a free phenylglycine carboxylate and converting the threonyl moiety into 2-amino-butenoic acid. The polypeptide is Virginiamycin B lyase (Mycobacterium sp. (strain JLS)).